Consider the following 421-residue polypeptide: Aspartokinase (421 aa).

7 to 10 is a binding site for ATP; it reads KYGG. 25–30 is a substrate binding site; it reads RIVATK. Serine 41 serves as a coordination point for ATP. Substrate contacts are provided by residues 45–49, glutamate 74, 125–126, 151–154, and serine 154; these read DTTDD, LE, and RGGS. ATP contacts are provided by residues 174 to 175, 180 to 185, and lysine 210; these read TD and FSADPR. 2 consecutive ACT domains span residues 267 to 348 and 349 to 421; these read VTIV…GKVS and LIGA…GTGR. Substrate contacts are provided by residues aspartate 274, 274–279, 292–294, glutamine 298, 360–361, 374–375, and 381–382; these read DIPGYA, NID, VT, NI, and SE.

This sequence belongs to the aspartokinase family. In terms of assembly, heterotetramer consisting of 2 isoforms Alpha (catalytic and regulation) and of a homodimer of 2 isoforms Beta (regulation).

The catalysed reaction is L-aspartate + ATP = 4-phospho-L-aspartate + ADP. The protein operates within amino-acid biosynthesis; L-lysine biosynthesis via DAP pathway; (S)-tetrahydrodipicolinate from L-aspartate: step 1/4. It participates in amino-acid biosynthesis; L-methionine biosynthesis via de novo pathway; L-homoserine from L-aspartate: step 1/3. Its pathway is amino-acid biosynthesis; L-threonine biosynthesis; L-threonine from L-aspartate: step 1/5. Its activity is regulated as follows. Feedback inhibition by lysine and threonine. Functionally, catalyzes the phosphorylation of the beta-carboxyl group of aspartic acid with ATP to yield 4-phospho-L-aspartate, which is involved in the branched biosynthetic pathway leading to the biosynthesis of amino acids lysine, threonine, isoleucine and methionine. In Mycobacterium bovis (strain ATCC BAA-935 / AF2122/97), this protein is Aspartokinase (ask).